The chain runs to 54 residues: UPF0391 membrane protein BAB1_1670 (54 aa).

The next 2 helical transmembrane spans lie at valine 5–glycine 25 and glycine 29–alanine 48.

It belongs to the UPF0391 family.

The protein localises to the cell membrane. In Brucella abortus (strain 2308), this protein is UPF0391 membrane protein BAB1_1670.